We begin with the raw amino-acid sequence, 848 residues long: Leucine--tRNA ligase (848 aa).

A disordered region spans residues 1–21 (MTENTPGTSAPERFDPATADT). The 'HIGH' region motif lies at 51–61 (PYPSGRIHIGH). Residues 625–629 (KMSKS) carry the 'KMSKS' region motif. Position 628 (Lys628) interacts with ATP.

Belongs to the class-I aminoacyl-tRNA synthetase family.

The protein localises to the cytoplasm. It carries out the reaction tRNA(Leu) + L-leucine + ATP = L-leucyl-tRNA(Leu) + AMP + diphosphate. This chain is Leucine--tRNA ligase, found in Novosphingobium aromaticivorans (strain ATCC 700278 / DSM 12444 / CCUG 56034 / CIP 105152 / NBRC 16084 / F199).